A 41-amino-acid chain; its full sequence is Large ribosomal subunit protein bL36 (41 aa).

This sequence belongs to the bacterial ribosomal protein bL36 family.

This chain is Large ribosomal subunit protein bL36, found in Rickettsia canadensis (strain McKiel).